Here is a 68-residue protein sequence, read N- to C-terminus: Large ribosomal subunit protein bL31 (68 aa).

4 residues coordinate Zn(2+): Cys-17, Cys-19, Cys-37, and Cys-40.

The protein belongs to the bacterial ribosomal protein bL31 family. Type A subfamily. In terms of assembly, part of the 50S ribosomal subunit. Zn(2+) serves as cofactor.

In terms of biological role, binds the 23S rRNA. The chain is Large ribosomal subunit protein bL31 from Clostridium perfringens (strain ATCC 13124 / DSM 756 / JCM 1290 / NCIMB 6125 / NCTC 8237 / Type A).